The primary structure comprises 185 residues: Putative manganese efflux pump MntP (185 aa).

Helical transmembrane passes span 3–23 (IFTL…VSLA), 40–60 (LLFV…VSVI), 64–84 (FDAY…LRMI), 102–122 (TFSR…AVGI), 124–144 (LSLA…FVLI), and 165–185 (EIFG…DAMM).

It belongs to the MntP (TC 9.B.29) family.

Its subcellular location is the cell inner membrane. Its function is as follows. Probably functions as a manganese efflux pump. The sequence is that of Putative manganese efflux pump MntP from Elusimicrobium minutum (strain Pei191).